The sequence spans 81 residues: Photosystem I iron-sulfur center (81 aa).

2 consecutive 4Fe-4S ferredoxin-type domains span residues 2-31 (AHSV…MVPW) and 39-68 (IASA…VRVY). C11, C14, C17, C21, C48, C51, C54, and C58 together coordinate [4Fe-4S] cluster.

In terms of assembly, the eukaryotic PSI reaction center is composed of at least 11 subunits. [4Fe-4S] cluster is required as a cofactor.

The protein localises to the plastid. It is found in the chloroplast thylakoid membrane. The catalysed reaction is reduced [plastocyanin] + hnu + oxidized [2Fe-2S]-[ferredoxin] = oxidized [plastocyanin] + reduced [2Fe-2S]-[ferredoxin]. Apoprotein for the two 4Fe-4S centers FA and FB of photosystem I (PSI); essential for photochemical activity. FB is the terminal electron acceptor of PSI, donating electrons to ferredoxin. The C-terminus interacts with PsaA/B/D and helps assemble the protein into the PSI complex. Required for binding of PsaD and PsaE to PSI. PSI is a plastocyanin/cytochrome c6-ferredoxin oxidoreductase, converting photonic excitation into a charge separation, which transfers an electron from the donor P700 chlorophyll pair to the spectroscopically characterized acceptors A0, A1, FX, FA and FB in turn. The protein is Photosystem I iron-sulfur center of Gracilaria tenuistipitata var. liui (Red alga).